A 122-amino-acid chain; its full sequence is Large ribosomal subunit protein uL14c (122 aa).

The protein belongs to the universal ribosomal protein uL14 family. In terms of assembly, part of the 50S ribosomal subunit.

It localises to the plastid. The protein resides in the chloroplast. In terms of biological role, binds to 23S rRNA. The protein is Large ribosomal subunit protein uL14c of Illicium oligandrum (Star anise).